The following is a 2193-amino-acid chain: Genome polyprotein (2193 aa).

The tract at residues 1–22 (MGSQVSTQRSGSHENSNSATEG) is disordered. Glycine 2 carries the N-myristoyl glycine; by host lipid modification. The Cytoplasmic portion of the chain corresponds to 2 to 1503 (GSQVSTQRSG…HLNRAVLVMQ (1502 aa)). Amphipathic alpha-helix regions lie at residues 566 to 588 (GDRVADVIESSIGDSVSRALTQA) and 568 to 588 (RVADVIESSIGDSVSRALTQA). Residues histidine 883 and aspartate 901 each act as for protease 2A activity in the active site. Cysteine 918 and cysteine 920 together coordinate Zn(2+). Cysteine 972 acts as the For protease 2A activity in catalysis. Zn(2+) is bound by residues cysteine 978 and histidine 980. A membrane-binding region spans residues 1112 to 1184 (SASWLKKFND…EQSAASQEDL (73 aa)). The interval 1112-1250 (SASWLKKFND…SPGTGKSLAT (139 aa)) is oligomerization. The interval 1133–1137 (SNKIS) is RNA-binding. The region spanning 1216 to 1374 (EKRMNNYMQF…YKTDLGRLDA (159 aa)) is the SF3 helicase domain. 1240-1247 (GSPGTGKS) is a binding site for ATP. Residues cysteine 1381, cysteine 1392, serine 1393, and cysteine 1397 each contribute to the Zn(2+) site. The C4-type; degenerate zinc-finger motif lies at 1381 to 1397 (CSENNTANFKRCSPLVC). Residues 1424–1431 (EYSNRSAI) form an RNA-binding region. An oligomerization region spans residues 1435-1440 (IEALFQ). An intramembrane segment occupies 1504-1519 (SIATVVAVVSLVYVIY). The Cytoplasmic portion of the chain corresponds to 1520 to 2193 (KLFAGFQGAY…NLRRNWLELF (674 aa)). Tyrosine 1529 carries the post-translational modification O-(5'-phospho-RNA)-tyrosine. One can recognise a Peptidase C3 domain in the interval 1549–1727 (GPSLDFALSL…FCAGLKRSYF (179 aa)). Residues histidine 1588, glutamate 1619, and cysteine 1695 each act as for protease 3C activity in the active site. The region spanning 1958-2073 (GSLFAFDYSG…ASYPFPIDCL (116 aa)) is the RdRp catalytic domain. Aspartate 1964 and aspartate 2060 together coordinate Mg(2+).

Belongs to the picornaviruses polyprotein family. In terms of assembly, interacts with capsid protein VP1 and capsid protein VP3 to form heterotrimeric protomers. Interacts with capsid protein VP0, and capsid protein VP3 to form heterotrimeric protomers. Five protomers subsequently associate to form pentamers which serve as building blocks for the capsid. Interacts with capsid protein VP2, capsid protein VP3 and capsid protein VP4 following cleavage of capsid protein VP0. Interacts with host SCARB2. Interacts with host ARF6; this interaction mediates viral endocytosis. As to quaternary structure, interacts with capsid protein VP1 and capsid protein VP3 in the mature capsid. Interacts with host SCARB2. In terms of assembly, interacts with capsid protein VP0 and capsid protein VP1 to form heterotrimeric protomers. Five protomers subsequently associate to form pentamers which serve as building blocks for the capsid. Interacts with capsid protein VP4 in the mature capsid. Interacts with protein 2C; this interaction may be important for virion morphogenesis. Interacts with capsid protein VP1 and capsid protein VP3. As to quaternary structure, homodimer. In terms of assembly, interacts with host BAX; this interaction activates the mitochondrial apoptotic pathway. Interacts with host ILF2. Homohexamer; forms a hexameric ring structure with 6-fold symmetry characteristic of AAA+ ATPases. Interacts (via N-terminus) with host RTN3 (via reticulon domain); this interaction is important for viral replication. Interacts with capsid protein VP3; this interaction may be important for virion morphogenesis. As to quaternary structure, interacts with protein 3CD. In terms of assembly, homodimer. Interacts with host GBF1. Interacts (via GOLD domain) with host ACBD3 (via GOLD domain); this interaction allows the formation of a viral protein 3A/ACBD3 heterotetramer with a 2:2 stoichiometry, which will stimulate the recruitment of host PI4KB in order to synthesize PI4P at the viral RNA replication sites. Interacts with RNA-directed RNA polymerase. As to quaternary structure, interacts with host IFIH1/MDA5; this interaction inhibits host IFIH1. Interacts with host RIGI. In terms of assembly, interacts with protein 3AB and with RNA-directed RNA polymerase. Interacts with Viral protein genome-linked and with protein 3CD. Mg(2+) serves as cofactor. Specific enzymatic cleavages in vivo by the viral proteases yield processing intermediates and the mature proteins. In terms of processing, myristoylation is required for the formation of pentamers during virus assembly. Further assembly of 12 pentamers and a molecule of genomic RNA generates the provirion. Post-translationally, during virion maturation, immature virions are rendered infectious following cleavage of VP0 into VP4 and VP2. This maturation seems to be an autocatalytic event triggered by the presence of RNA in the capsid and it is followed by a conformational change infectious virion. Myristoylation is required during RNA encapsidation and formation of the mature virus particle. In terms of processing, VPg is uridylylated by the polymerase into VPg-pUpU. This acts as a nucleotide-peptide primer for the genomic RNA replication.

It is found in the virion. The protein localises to the host cytoplasm. The protein resides in the host cytoplasmic vesicle membrane. It localises to the host nucleus. It carries out the reaction a ribonucleoside 5'-triphosphate + H2O = a ribonucleoside 5'-diphosphate + phosphate + H(+). The enzyme catalyses Selective cleavage of Tyr-|-Gly bond in the picornavirus polyprotein.. The catalysed reaction is RNA(n) + a ribonucleoside 5'-triphosphate = RNA(n+1) + diphosphate. It catalyses the reaction Selective cleavage of Gln-|-Gly bond in the poliovirus polyprotein. In other picornavirus reactions Glu may be substituted for Gln, and Ser or Thr for Gly.. With respect to regulation, replication or transcription is subject to high level of random mutations by the nucleotide analog ribavirin. Functionally, forms an icosahedral capsid of pseudo T=3 symmetry with capsid proteins VP2 and VP3. The capsid is 300 Angstroms in diameter, composed of 60 copies of each capsid protein and enclosing the viral positive strand RNA genome. Capsid protein VP1 mainly forms the vertices of the capsid. Capsid protein VP1, together with VP2, interacts with host cell receptor SCARB2 to provide virion attachment to target host cells. This attachment induces virion internalization. This attachment induces virion internalization. After binding to its receptor, the capsid undergoes conformational changes. Capsid protein VP1 N-terminus (that contains an amphipathic alpha-helix) and capsid protein VP4 are externalized. Together, they shape a pore in the host membrane through which viral genome is translocated to host cell cytoplasm. Its function is as follows. Forms an icosahedral capsid of pseudo T=3 symmetry with capsid proteins VP2 and VP3. The capsid is 300 Angstroms in diameter, composed of 60 copies of each capsid protein and enclosing the viral positive strand RNA genome. Capsid protein VP2, together with VP1, interacts with host cell receptor SCARB2 to provide virion attachment to target host cells. Forms an icosahedral capsid of pseudo T=3 symmetry with capsid proteins VP2 and VP3. The capsid is 300 Angstroms in diameter, composed of 60 copies of each capsid protein and enclosing the viral positive strand RNA genome. In terms of biological role, lies on the inner surface of the capsid shell. After binding to the host receptor, the capsid undergoes conformational changes. Capsid protein VP4 is released, Capsid protein VP1 N-terminus is externalized, and together, they shape a pore in the host membrane through which the viral genome is translocated into the host cell cytoplasm. Functionally, component of immature procapsids, which is cleaved into capsid proteins VP4 and VP2 after maturation. Allows the capsid to remain inactive before the maturation step. Its function is as follows. Cysteine protease that cleaves viral polyprotein and specific host proteins. It is responsible for the autocatalytic cleavage between the P1 and P2 regions, which is the first cleavage occurring in the polyprotein. Also cleaves the host translation initiation factor EIF4G1, in order to shut down the capped cellular mRNA translation. Inhibits the host nucleus-cytoplasm protein and RNA trafficking by cleaving host members of the nuclear pores. Counteracts stress granule formation probably by antagonizing its assembly or promoting its dissassembly. Cleaves and inhibits host IFIH1/MDA5, thereby inhibiting the type-I IFN production and the establishment of the antiviral state. Cleaves and inhibits host MAVS, thereby inhibiting the type-I IFN production and the establishment of the antiviral state. Plays an essential role in the virus replication cycle by acting as a viroporin. Creates a pore in the host endoplasmic reticulum and as a consequence releases Ca2+ in the cytoplasm of infected cell. In turn, high levels of cytoplasmic calcium may trigger membrane trafficking and transport of viral ER-associated proteins to viroplasms, sites of viral genome replication. Also activates the mitochondrial apoptotic pathway by activating host BAX. In terms of biological role, induces and associates with structural rearrangements of intracellular membranes. Displays RNA-binding, nucleotide binding and NTPase activities. May play a role in virion morphogenesis and viral RNA encapsidation by interacting with the capsid protein VP3. Functionally, localizes the viral replication complex to the surface of membranous vesicles. Together with protein 3CD binds the Cis-Active RNA Element (CRE) which is involved in RNA synthesis initiation. Acts as a cofactor to stimulate the activity of 3D polymerase, maybe through a nucleid acid chaperone activity. Its function is as follows. Localizes the viral replication complex to the surface of membranous vesicles. It inhibits host cell endoplasmic reticulum-to-Golgi apparatus transport and causes the disassembly of the Golgi complex, possibly through GBF1 interaction. This would result in depletion of MHC, trail receptors and IFN receptors at the host cell surface. Plays an essential role in viral RNA replication by recruiting ACBD3 and PI4KB at the viral replication sites, thereby allowing the formation of the rearranged membranous structures where viral replication takes place. Acts as a primer for viral RNA replication and remains covalently bound to viral genomic RNA. VPg is uridylylated prior to priming replication into VPg-pUpU. The oriI viral genomic sequence may act as a template for this. The VPg-pUpU is then used as primer on the genomic RNA poly(A) by the RNA-dependent RNA polymerase to replicate the viral genome. During genome replication, the VPg-RNA linkage is removed by the host TDP2, thereby accelerating replication. During the late stage of the replication cycle, host TDP2 is excluded from sites of viral RNA synthesis and encapsidation, allowing for the generation of progeny virions. In terms of biological role, involved in the viral replication complex and viral polypeptide maturation. It exhibits protease activity with a specificity and catalytic efficiency that is different from protease 3C. Protein 3CD lacks polymerase activity. Protein 3CD binds to the 5'UTR of the viral genome. Functionally, major viral protease that mediates proteolytic processing of the polyprotein. Cleaves host EIF5B, contributing to host translation shutoff. Also cleaves host PABPC1, contributing to host translation shutoff. Disassembles host cytoplasmic stress granules by cleaving host G3BP1, although this effect is less prononced than the inhibition induced by protease 2A. Cleaves host RIGI and thus contributes to the inhibition of type I interferon production. Cleaves host IRF7 and thus contributes to the inhibition of type I interferon production. Cleaves host HNRNPA1 thereby increasing the translation of apoptosis protease activating factor APAF1, leading to apoptosis of the host cell. Cleaves host NLRP1, triggers host N-glycine-mediated degradation of the autoinhibitory NLRP1 N-terminal fragment. Its function is as follows. Replicates the viral genomic RNA on the surface of intracellular membranes. May form linear arrays of subunits that propagate along a strong head-to-tail interaction called interface-I. Covalently attaches UMP to a tyrosine of VPg, which is used to prime RNA synthesis. The positive stranded RNA genome is first replicated at virus induced membranous vesicles, creating a dsRNA genomic replication form. This dsRNA is then used as template to synthesize positive stranded RNA genomes. ss(+)RNA genomes are either translated, replicated or encapsidated. The protein is Genome polyprotein of Homo sapiens (Human).